The chain runs to 395 residues: Acetate kinase (395 aa).

Asparagine 8 provides a ligand contact to Mg(2+). Lysine 15 provides a ligand contact to ATP. Arginine 94 contributes to the substrate binding site. Aspartate 151 functions as the Proton donor/acceptor in the catalytic mechanism. ATP is bound by residues 210–214, 284–286, and 329–333; these read HLGNG, DMR, and GIGEN. Glutamate 382 provides a ligand contact to Mg(2+).

It belongs to the acetokinase family. In terms of assembly, homodimer. The cofactor is Mg(2+). Mn(2+) is required as a cofactor.

It localises to the cytoplasm. It carries out the reaction acetate + ATP = acetyl phosphate + ADP. The protein operates within metabolic intermediate biosynthesis; acetyl-CoA biosynthesis; acetyl-CoA from acetate: step 1/2. Catalyzes the formation of acetyl phosphate from acetate and ATP. Can also catalyze the reverse reaction. This chain is Acetate kinase, found in Protochlamydia amoebophila (strain UWE25).